The following is a 524-amino-acid chain: Acetyl-CoA hydrolase (524 aa).

Position 279 to 283 (279 to 283 (GIGNI)) interacts with CoA. E304 functions as the 5-glutamyl coenzyme A thioester intermediate in the catalytic mechanism. G398 provides a ligand contact to CoA.

The protein belongs to the acetyl-CoA hydrolase/transferase family.

Its subcellular location is the cytoplasm. The enzyme catalyses acetyl-CoA + H2O = acetate + CoA + H(+). Presumably involved in regulating the intracellular acetyl-CoA pool for fatty acid and cholesterol synthesis and fatty acid oxidation. The polypeptide is Acetyl-CoA hydrolase (ACH1) (Yarrowia lipolytica (strain CLIB 122 / E 150) (Yeast)).